The following is an 87-amino-acid chain: U14-lycotoxin-Ls1b (87 aa).

Residues 1–20 (MNSKVFAVLLLLALSTCVLS) form the signal peptide. In terms of domain architecture, WAP spans 21–66 (EKYCPTPRNTSCKKMNIRNNCCRDSDCTSNAFCCAEPCGNFCHKAS). 5 disulfides stabilise this stretch: Cys-24-Cys-54, Cys-32-Cys-58, Cys-41-Cys-53, Cys-42-Cys-80, and Cys-47-Cys-62.

It belongs to the venom protein 11 family. 01 (wap-1) subfamily. Contains 5 disulfide bonds. As to expression, expressed by the venom gland.

The protein localises to the secreted. Has antibacterial activity. This Lycosa singoriensis (Wolf spider) protein is U14-lycotoxin-Ls1b.